A 274-amino-acid polypeptide reads, in one-letter code: NH(3)-dependent NAD(+) synthetase (274 aa).

46–53 is an ATP binding site; the sequence is GISGGQDS. D52 lines the Mg(2+) pocket. R140 is a binding site for deamido-NAD(+). ATP is bound at residue T160. Position 165 (E165) interacts with Mg(2+). Residues K173 and D180 each contribute to the deamido-NAD(+) site. ATP contacts are provided by K189 and T211. 260-261 contacts deamido-NAD(+); sequence HK.

It belongs to the NAD synthetase family. Homodimer.

The enzyme catalyses deamido-NAD(+) + NH4(+) + ATP = AMP + diphosphate + NAD(+) + H(+). Its pathway is cofactor biosynthesis; NAD(+) biosynthesis; NAD(+) from deamido-NAD(+) (ammonia route): step 1/1. Catalyzes the ATP-dependent amidation of deamido-NAD to form NAD. Uses ammonia as a nitrogen source. The chain is NH(3)-dependent NAD(+) synthetase from Pectobacterium atrosepticum (strain SCRI 1043 / ATCC BAA-672) (Erwinia carotovora subsp. atroseptica).